The chain runs to 207 residues: Phenazine biosynthesis protein PhzD1 (207 aa).

Catalysis depends on aspartate 38, which acts as the Proton donor. Substrate-binding positions include glutamine 78, arginine 87, lysine 122, and 151-155; that span reads YAHVG.

It belongs to the isochorismatase family. Homodimer.

It carries out the reaction (2S)-2-amino-4-deoxychorismate + H2O = (5S,6S)-6-amino-5-hydroxycyclohexa-1,3-diene-1-carboxyate + pyruvate. It participates in antibiotic biosynthesis; phenazine biosynthesis. In terms of biological role, involved in the biosynthesis of the antibiotic phenazine, a nitrogen-containing heterocyclic molecule. PhzD1 (operon phzA1B1C1E1F1G1) has a role in the biosynthesis of the phenazine during planktonic growth. Catalyzes the hydrolysis of the vinyl ether functional group of 2-amino-2-deoxyisochorismate (ADIC), yielding pyruvate and trans-2,3-dihydro-3-hydroxyanthranilic acid (DHHA). Also able to act on isochorismate, chorismate and 4-amino-4-deoxychorismate (ADC) as substrates. This Pseudomonas aeruginosa (strain ATCC 15692 / DSM 22644 / CIP 104116 / JCM 14847 / LMG 12228 / 1C / PRS 101 / PAO1) protein is Phenazine biosynthesis protein PhzD1.